A 276-amino-acid polypeptide reads, in one-letter code: Putative pyruvate, phosphate dikinase regulatory protein (276 aa).

Residue 152–159 (GISRTSKT) coordinates ADP.

Belongs to the pyruvate, phosphate/water dikinase regulatory protein family. PDRP subfamily.

It carries out the reaction N(tele)-phospho-L-histidyl/L-threonyl-[pyruvate, phosphate dikinase] + ADP = N(tele)-phospho-L-histidyl/O-phospho-L-threonyl-[pyruvate, phosphate dikinase] + AMP + H(+). It catalyses the reaction N(tele)-phospho-L-histidyl/O-phospho-L-threonyl-[pyruvate, phosphate dikinase] + phosphate + H(+) = N(tele)-phospho-L-histidyl/L-threonyl-[pyruvate, phosphate dikinase] + diphosphate. In terms of biological role, bifunctional serine/threonine kinase and phosphorylase involved in the regulation of the pyruvate, phosphate dikinase (PPDK) by catalyzing its phosphorylation/dephosphorylation. This is Putative pyruvate, phosphate dikinase regulatory protein from Staphylococcus carnosus (strain TM300).